We begin with the raw amino-acid sequence, 518 residues long: Suppressor of hairless homolog (518 aa).

Residues E22–P59 are disordered. Basic and acidic residues predominate over residues D24–V34. The span at G36–P50 shows a compositional bias: polar residues. 3 DNA-binding regions span residues K89–R96, R223–R232, and R296–Y328. Residues P386–T476 enclose the IPT/TIG domain.

This sequence belongs to the Su(H) family. Interacts with activated Notch proteins.

The protein localises to the nucleus. Transcriptional regulator that plays a central role in Notch signaling, a signaling pathway involved in cell-cell communication that regulates a broad spectrum of cell-fate determinations. Acts as a transcriptional repressor when it is not associated with Notch proteins. When associated with some Notch protein, it acts as a transcriptional activator that activates transcription of Notch target genes. In Halocynthia roretzi (Sea squirt), this protein is Suppressor of hairless homolog (RBP-JK).